Consider the following 253-residue polypeptide: Phosphate import ATP-binding protein PstB (253 aa).

In terms of domain architecture, ABC transporter spans 7-248 (IKVRDLNLYY…PRDRRTEDYI (242 aa)). 39 to 46 (GPSGCGKS) contacts ATP.

It belongs to the ABC transporter superfamily. Phosphate importer (TC 3.A.1.7) family. The complex is composed of two ATP-binding proteins (PstB), two transmembrane proteins (PstC and PstA) and a solute-binding protein (PstS).

It is found in the cell membrane. It carries out the reaction phosphate(out) + ATP + H2O = ADP + 2 phosphate(in) + H(+). Its function is as follows. Part of the ABC transporter complex PstSACB involved in phosphate import. Responsible for energy coupling to the transport system. This chain is Phosphate import ATP-binding protein PstB, found in Carboxydothermus hydrogenoformans (strain ATCC BAA-161 / DSM 6008 / Z-2901).